The following is a 212-amino-acid chain: Glycerol-3-phosphate acyltransferase (212 aa).

Helical transmembrane passes span 3–23 (ILLA…VVVS), 78–98 (DVAV…PVFF), 115–135 (AVHP…AFFF), and 155–177 (FLFG…LLVW).

The protein belongs to the PlsY family. In terms of assembly, probably interacts with PlsX.

The protein localises to the cell inner membrane. The enzyme catalyses an acyl phosphate + sn-glycerol 3-phosphate = a 1-acyl-sn-glycero-3-phosphate + phosphate. Its pathway is lipid metabolism; phospholipid metabolism. Functionally, catalyzes the transfer of an acyl group from acyl-phosphate (acyl-PO(4)) to glycerol-3-phosphate (G3P) to form lysophosphatidic acid (LPA). This enzyme utilizes acyl-phosphate as fatty acyl donor, but not acyl-CoA or acyl-ACP. This Burkholderia ambifaria (strain ATCC BAA-244 / DSM 16087 / CCUG 44356 / LMG 19182 / AMMD) (Burkholderia cepacia (strain AMMD)) protein is Glycerol-3-phosphate acyltransferase.